We begin with the raw amino-acid sequence, 375 residues long: Methylthioribose-1-phosphate isomerase (375 aa).

Catalysis depends on Asp259, which acts as the Proton donor.

It belongs to the eIF-2B alpha/beta/delta subunits family. MtnA subfamily.

Its subcellular location is the cytoplasm. The protein resides in the nucleus. It carries out the reaction 5-(methylsulfanyl)-alpha-D-ribose 1-phosphate = 5-(methylsulfanyl)-D-ribulose 1-phosphate. The protein operates within amino-acid biosynthesis; L-methionine biosynthesis via salvage pathway; L-methionine from S-methyl-5-thio-alpha-D-ribose 1-phosphate: step 1/6. Functionally, catalyzes the interconversion of methylthioribose-1-phosphate (MTR-1-P) into methylthioribulose-1-phosphate (MTRu-1-P). The sequence is that of Methylthioribose-1-phosphate isomerase from Populus trichocarpa (Western balsam poplar).